A 959-amino-acid chain; its full sequence is Glutamate receptor 3.4 (959 aa).

The first 35 residues, 1–35, serve as a signal peptide directing secretion; the sequence is MGFLVMIREVSMAKAIRVVLLCVSVLWVVPKECAC. Over 36 to 613 the chain is Extracellular; it reads RSNFSRNSSS…SPWSFLKPFT (578 aa). Residues asparagine 38, asparagine 42, asparagine 108, asparagine 365, asparagine 378, asparagine 404, asparagine 443, asparagine 461, and asparagine 576 are each glycosylated (N-linked (GlcNAc...) asparagine). Residues 614–634 traverse the membrane as a helical segment; sequence IEMWAVTGGFFLFVGAMVWIL. Over 635–643 the chain is Cytoplasmic; sequence EHRFNQEFR. Residues 644–664 form a helical membrane-spanning segment; sequence GPPRRQLITIFWFSFSTMFFS. At 665-675 the chain is on the cytoplasmic side; that stretch reads HRENTVSSLGR. A helical membrane pass occupies residues 676-696; sequence FVLIIWLFVVLIINSSYTASL. Over 697–857 the chain is Extracellular; that stretch reads TSILTIRQLT…SEDSQLSLKS (161 aa). The chain crosses the membrane as a helical span at residues 858 to 878; that stretch reads FWGLFLICGITCFMALTVFFW. At 879-959 the chain is on the cytoplasmic side; that stretch reads RVFWQYQRLL…TSQSQHGEIT (81 aa). 2 disordered regions span residues 893 to 913 and 936 to 959; these read DEER…SRAP and KSSK…GEIT. Positions 943-959 are enriched in low complexity; the sequence is STQSAAGTSQSQHGEIT.

It belongs to the glutamate-gated ion channel (TC 1.A.10.1) family. Forms a heteromeric channel with GLR3.2. Highly expressed in roots and at lower levels in leaves and siliques. Expressed in seedlings, cotyledons, roots (e.g. root hairs, epidermis and cortex cells), stems, leaves (e.g. vascular bundles and hydathodes), and siliques. Expressed in root phloem.

Its subcellular location is the cell membrane. It is found in the plastid. It localises to the chloroplast membrane. Its function is as follows. Glutamate-gated receptor that probably acts as a non-selective cation channel, at least in hypocotyls. Can be triggered by Asn, Ser, Gly and, to a lower extent, Ala, Cys and Glu. May be involved in light-signal transduction and calcium homeostasis via the regulation of calcium influx into cells. Plays an important role in the calcium-based fast transmission of environmental stress. Acts as a negative regulator of lateral root initiation and development. May restrict primordia numbers and position along the root axis by a signaling process originating in the phloem. AtGLR3.4-mediated cytosolic calcium influx may be involved in the regulation of seed germination under salt stress by modulating sodium accumulation through the SOS pathway. This Arabidopsis thaliana (Mouse-ear cress) protein is Glutamate receptor 3.4.